The primary structure comprises 1230 residues: Cullin-associated NEDD8-dissociated protein 1 (1230 aa).

A2 is modified (N-acetylalanine). HEAT repeat units lie at residues 2 to 39 (ASAS…KDSI), 44 to 81 (DSER…KVKE), 83 to 119 (QVET…ELPP), 131 to 165 (CKKI…LSRQ), 171 to 208 (NFHP…SCGN), 210 to 247 (VFVD…QAGH), 248 to 282 (RIGE…FESF), 289 to 366 (EVYP…TRHE), 370 to 407 (EFYK…QTRP), 424 to 467 (PLTM…VLPG), 471 to 510 (QHIP…NHSP), and 515 to 552 (PHVQ…VIRP). K55 carries the N6-acetyllysine modification. The interval 315–344 (DEDEDENAMDADGGDDDDQGSDDEYSDDDD) is disordered. S335 carries the phosphoserine modification. S558 bears the Phosphoserine mark. HEAT repeat units lie at residues 563–602 (PYIK…NLGD), 606–643 (SDLP…LKID), 646–683 (PVLG…NYSD), 688–725 (AMID…VYPS), 729–768 (KISG…TGTN), 770–808 (LGYM…ALTR), 809–845 (ACPK…LGEV), 852–889 (SGQL…GNLP), 890–927 (EYLP…GLKP), 928–960 (YVEN…KLTL), 961–998 (IDPE…DHPQ), 1002–1039 (PLLK…NKPS), 1043–1097 (DLLD…DSCL), 1099–1133 (RLDI…LSTL), and 1140–1189 (QRLD…IPEA). K971 carries the post-translational modification N6-acetyllysine.

It belongs to the CAND family. Interacts with TBP. Part of a complex that contains CUL1 and RBX1. Interacts with unneddylated cullins: interacts with CUL1, CUL2, CUL3, CUL4A, CUL4B and CUL5. Does not bind neddylated CUL1. Interaction with cullins is abolished in presence of COMMD1, which antagonizes with CAND1 for interacting with cullins. Interacts with ERCC6. Interacts with DCUN1D1, DCUN1D2, DCUN1D3, DCUN1D4 and DCUN1D5; these interactions are bridged by cullins and strongly inhibits the neddylation of cullins.

Its subcellular location is the cytoplasm. The protein localises to the nucleus. Functionally, key assembly factor of SCF (SKP1-CUL1-F-box protein) E3 ubiquitin ligase complexes that promotes the exchange of the substrate-recognition F-box subunit in SCF complexes, thereby playing a key role in the cellular repertoire of SCF complexes. Acts as a F-box protein exchange factor. The exchange activity of CAND1 is coupled with cycles of neddylation conjugation: in the deneddylated state, cullin-binding CAND1 binds CUL1-RBX1, increasing dissociation of the SCF complex and promoting exchange of the F-box protein. Probably plays a similar role in other cullin-RING E3 ubiquitin ligase complexes. The protein is Cullin-associated NEDD8-dissociated protein 1 (CAND1) of Bos taurus (Bovine).